Reading from the N-terminus, the 258-residue chain is Adenylate kinase (258 aa).

52–57 (GAGKGT) is an ATP binding site. The segment at 72–101 (ATGDMLRSQVAKKTELGKEAKKIMDQGGLV) is NMP. AMP-binding positions include Thr-73, Arg-78, 99–101 (GLV), 128–131 (GFPR), and Gln-135. The interval 169–206 (GRLVHPASGRSYHKVFNPPKQEMKDDITGEPLIQRSDD) is LID. ATP is bound by residues Arg-170 and 179-180 (SY). Residues Arg-203 and Arg-214 each contribute to the AMP site. Residue Gln-242 coordinates ATP.

This sequence belongs to the adenylate kinase family. AK2 subfamily. In terms of assembly, monomer.

The protein resides in the cytoplasm. It localises to the cytosol. The protein localises to the mitochondrion intermembrane space. It carries out the reaction AMP + ATP = 2 ADP. Catalyzes the reversible transfer of the terminal phosphate group between ATP and AMP. Plays an important role in cellular energy homeostasis and in adenine nucleotide metabolism. Adenylate kinase activity is critical for regulation of the phosphate utilization and the AMP de novo biosynthesis pathways. This is Adenylate kinase (adk1) from Aspergillus oryzae (strain ATCC 42149 / RIB 40) (Yellow koji mold).